An 89-amino-acid chain; its full sequence is Small ribosomal subunit protein uS15 (89 aa).

The protein belongs to the universal ribosomal protein uS15 family. In terms of assembly, part of the 30S ribosomal subunit. Forms a bridge to the 50S subunit in the 70S ribosome, contacting the 23S rRNA.

Functionally, one of the primary rRNA binding proteins, it binds directly to 16S rRNA where it helps nucleate assembly of the platform of the 30S subunit by binding and bridging several RNA helices of the 16S rRNA. Its function is as follows. Forms an intersubunit bridge (bridge B4) with the 23S rRNA of the 50S subunit in the ribosome. The sequence is that of Small ribosomal subunit protein uS15 from Pseudomonas entomophila (strain L48).